Consider the following 326-residue polypeptide: Metal-binding protein YtgA (326 aa).

The signal sequence occupies residues 1-21 (MFFLHVRKYKHVIGGLLCLAG). The Fe(2+) site is built by His75, His141, His207, and Asp299.

Belongs to the bacterial solute-binding protein 9 family. In terms of assembly, monomer.

Its subcellular location is the periplasm. Functionally, part of the ATP-binding cassette (ABC) transport system YtgABCD involved in metal import. Binds Fe(2+), Mn(2+) and Ni(2+), with a preference for Fe(2+) and delivers them to the membrane permease for translocation into the cytoplasm. This is Metal-binding protein YtgA from Chlamydia muridarum (strain MoPn / Nigg).